The following is a 265-amino-acid chain: Triosephosphate isomerase (265 aa).

Substrate is bound at residue 13–15; that stretch reads NWK. His-106 acts as the Electrophile in catalysis. The Proton acceptor role is filled by Glu-179. Substrate-binding positions include Gly-185, Ser-223, and 244–245; that span reads GG.

This sequence belongs to the triosephosphate isomerase family. In terms of assembly, homodimer.

The protein localises to the cytoplasm. It catalyses the reaction D-glyceraldehyde 3-phosphate = dihydroxyacetone phosphate. The protein operates within carbohydrate biosynthesis; gluconeogenesis. Its pathway is carbohydrate degradation; glycolysis; D-glyceraldehyde 3-phosphate from glycerone phosphate: step 1/1. Involved in the gluconeogenesis. Catalyzes stereospecifically the conversion of dihydroxyacetone phosphate (DHAP) to D-glyceraldehyde-3-phosphate (G3P). This chain is Triosephosphate isomerase, found in Acinetobacter baylyi (strain ATCC 33305 / BD413 / ADP1).